Here is a 206-residue protein sequence, read N- to C-terminus: MPTVEVFNKEGKKVEDIELSEKVFGAKISESALHQVVVAQLANKRQGTQSAKTRTEVSGGGIKPWRQKGTGRARQGSIRAPQWIHGGVVFAPKPRDYRISIPKSMRRTAMLSALTSKVNDKEMIVLDELKIDAPKTKEIVKMLNAFEAKKALIVVAESDQNVYKSVRNIQGAAVIPANNLNVYDILKYDKFIVTKEAVSKIEEVYA.

Residues 45-76 (RQGTQSAKTRTEVSGGGIKPWRQKGTGRARQG) are disordered.

The protein belongs to the universal ribosomal protein uL4 family. Part of the 50S ribosomal subunit.

Its function is as follows. One of the primary rRNA binding proteins, this protein initially binds near the 5'-end of the 23S rRNA. It is important during the early stages of 50S assembly. It makes multiple contacts with different domains of the 23S rRNA in the assembled 50S subunit and ribosome. In terms of biological role, forms part of the polypeptide exit tunnel. The sequence is that of Large ribosomal subunit protein uL4 from Clostridium acetobutylicum (strain ATCC 824 / DSM 792 / JCM 1419 / IAM 19013 / LMG 5710 / NBRC 13948 / NRRL B-527 / VKM B-1787 / 2291 / W).